Reading from the N-terminus, the 227-residue chain is MANHSQLGFQDASSPIMEELVEFHDHALMVALAICSLVLYLLTLMLMEKLSSNTVDAQEVELIWTILPAIVLVLLALPSLQILYMMDEIDEPDLTLKAIGHQWYWTYEYTDFKDLSFDSYMTPTTDLPLGHFRLLEVDHRIVIPMESPIRVIITADDVLHSWAVPALGVKTDAIPGRLNQTSFITTRPGVFYGQCSEICGANHSYMPIVVESTPLKHFEAWSSLLSS.

Residues 1-14 are Mitochondrial intermembrane-facing; sequence MANHSQLGFQDASS. Residues 15-45 traverse the membrane as a helical segment; sequence PIMEELVEFHDHALMVALAICSLVLYLLTLM. Topologically, residues 46 to 58 are mitochondrial matrix; sequence LMEKLSSNTVDAQ. The helical transmembrane segment at 59 to 86 threads the bilayer; it reads EVELIWTILPAIVLVLLALPSLQILYMM. At 87–227 the chain is on the mitochondrial intermembrane side; that stretch reads DEIDEPDLTL…FEAWSSLLSS (141 aa). H160, C195, E197, C199, H203, and M206 together coordinate Cu cation. Position 197 (E197) interacts with Mg(2+).

Belongs to the cytochrome c oxidase subunit 2 family. Component of the cytochrome c oxidase (complex IV, CIV), a multisubunit enzyme composed of 14 subunits. The complex is composed of a catalytic core of 3 subunits MT-CO1, MT-CO2 and MT-CO3, encoded in the mitochondrial DNA, and 11 supernumerary subunits COX4I, COX5A, COX5B, COX6A, COX6B, COX6C, COX7A, COX7B, COX7C, COX8 and NDUFA4, which are encoded in the nuclear genome. The complex exists as a monomer or a dimer and forms supercomplexes (SCs) in the inner mitochondrial membrane with NADH-ubiquinone oxidoreductase (complex I, CI) and ubiquinol-cytochrome c oxidoreductase (cytochrome b-c1 complex, complex III, CIII), resulting in different assemblies (supercomplex SCI(1)III(2)IV(1) and megacomplex MCI(2)III(2)IV(2)). Found in a complex with TMEM177, COA6, COX18, COX20, SCO1 and SCO2. Interacts with TMEM177 in a COX20-dependent manner. Interacts with COX20. Interacts with COX16. Cu cation serves as cofactor.

Its subcellular location is the mitochondrion inner membrane. It catalyses the reaction 4 Fe(II)-[cytochrome c] + O2 + 8 H(+)(in) = 4 Fe(III)-[cytochrome c] + 2 H2O + 4 H(+)(out). Its function is as follows. Component of the cytochrome c oxidase, the last enzyme in the mitochondrial electron transport chain which drives oxidative phosphorylation. The respiratory chain contains 3 multisubunit complexes succinate dehydrogenase (complex II, CII), ubiquinol-cytochrome c oxidoreductase (cytochrome b-c1 complex, complex III, CIII) and cytochrome c oxidase (complex IV, CIV), that cooperate to transfer electrons derived from NADH and succinate to molecular oxygen, creating an electrochemical gradient over the inner membrane that drives transmembrane transport and the ATP synthase. Cytochrome c oxidase is the component of the respiratory chain that catalyzes the reduction of oxygen to water. Electrons originating from reduced cytochrome c in the intermembrane space (IMS) are transferred via the dinuclear copper A center (CU(A)) of subunit 2 and heme A of subunit 1 to the active site in subunit 1, a binuclear center (BNC) formed by heme A3 and copper B (CU(B)). The BNC reduces molecular oxygen to 2 water molecules using 4 electrons from cytochrome c in the IMS and 4 protons from the mitochondrial matrix. This Gallus gallus (Chicken) protein is Cytochrome c oxidase subunit 2 (MT-CO2).